Here is a 604-residue protein sequence, read N- to C-terminus: Glucose oxidase (604 aa).

The N-terminal stretch at 1–18 is a signal peptide; the sequence is MKSTIITSILFSVATVQA. FAD contacts are provided by Leu-52, Thr-53, and Glu-73. A glycan (N-linked (GlcNAc...) asparagine) is linked at Asn-111. FAD is bound by residues Ser-125, Asn-129, Gly-130, and Ser-132. A disulfide bond links Cys-186 and Cys-228. Asn-213 carries an N-linked (GlcNAc...) asparagine glycan. Residue Val-272 coordinates FAD. Residues Asn-278, Asn-409, and Asn-531 are each glycosylated (N-linked (GlcNAc...) asparagine). The active-site Proton acceptor is the His-537. O2 contacts are provided by Lys-558 and Val-559. FAD is bound by residues Gly-570 and Met-582.

Belongs to the GMC oxidoreductase family. As to quaternary structure, homodimer. The cofactor is FAD.

The protein resides in the secreted. Its subcellular location is the cell wall. The protein localises to the cytoplasm. It localises to the extracellular space. It is found in the extracellular matrix. The enzyme catalyses beta-D-glucose + O2 = D-glucono-1,5-lactone + H2O2. Its function is as follows. Glucose oxidase catalyzes the oxidation of beta-D-glucose to D-glucono-delta-lactone and hydrogen peroxide in the presence of molecular oxygen. The enzyme also catalyzes the reaction with D-xylose but at a much lower rate. Shows any activities against D-fructose, D-galactose and D-arabinose. The enzyme is cytotoxic for a series of bacteria, yeasts and filamentous fungi and acts primarily via the liberation of H(2)O(2), which is a harmful oxidative stress-generating agent. The sequence is that of Glucose oxidase from Penicillium chrysogenum (Penicillium notatum).